A 1055-amino-acid chain; its full sequence is Activated CDC42 kinase 1 (1055 aa).

The interval 1 to 110 (MQPEEGTGWL…PSPTPGSLPG (110 aa)) is SAM-like domain. Residues 91–110 (SQHSQSTFRKPSPTPGSLPG) are disordered. Residue T113 is modified to Phosphothreonine. The Protein kinase domain maps to 126-385 (LRLLEKLGDG…PTFVALRDFL (260 aa)). ATP is bound by residues 132–140 (LGDGSFGVV) and K158. Residue D252 is the Proton acceptor of the active site. Y284 bears the Phosphotyrosine; by SRC and autocatalysis mark. The SH3 domain occupies 388-448 (AQPTDMRALQ…PRNVVTSVAG (61 aa)). Positions 454 to 466 (ISQPLQNSFIHTG) constitute a CRIB domain. Positions 505-548 (RPTQHLGRVKREPPPRPPQPAIFTQKTTYDPVSEDPDPLSSDFK) are disordered. A phosphotyrosine mark is found at P518 and Y533. The tract at residues 638–667 (DWDARPLPPPPAYDDVAQDEDDFEVCSINS) is required for interaction with SRC. The tract at residues 647 to 650 (PPAY) is required for interaction with NEDD4. Residues 737–855 (TGQLTPSPTP…QVIQAPGPRA (119 aa)) are disordered. Residues 748 to 891 (GDDKPQVPPR…PYLERYQRFL (144 aa)) are EBD domain. Pro residues-rich tracts occupy residues 753–764 (QVPPRVPIPPRP) and 787–798 (PASPPRVPPREP). A compositionally biased stretch (low complexity) spans 817–827 (PLPHRLSSSPG). Y842 carries the post-translational modification Phosphotyrosine. R854 is subject to Omega-N-methylarginine. Phosphotyrosine occurs at positions 874 and 887. S896 is subject to Phosphoserine. The segment at 896–952 (SPEEPAALPVPPLLPPPSTPAPAAPTATVRPMPQAAPDPKANFSTNNSNPGARPPSL) is disordered. A compositionally biased stretch (pro residues) spans 903–918 (LPVPPLLPPPSTPAPA). Residues 973 to 1013 (PADKVQMLQAMVHGVTTEECQAALQSHSWSVQRAAQYLKVE) form the UBA domain.

It belongs to the protein kinase superfamily. Tyr protein kinase family. Homodimer. Interacts with CSPG4 (activated). Interacts with MERTK (activated); stimulates autophosphorylation. May interact (phosphorylated) with HSP90AB1; maintains kinase activity. Interacts with NPHP1. Interacts with SNX9 (via SH3 domain). Interacts with SRC (via SH2 and SH3 domain). Part of a collagen stimulated complex involved in cell migration composed of CDC42, CRK, TNK2 and BCAR1/p130cas. Interacts with BCAR1/p130cas via SH3 domains. Forms complexes with GRB2 and numerous receptor tyrosine kinases (RTK) including LTK, AXL or PDGFRL, in which GRB2 promotes RTK recruitment by TNK2. Interacts with CDC42. Interacts with EGFR, and this interaction is dependent on EGF stimulation and kinase activity of EGFR. Interacts (via kinase domain) with AKT1. Interacts with NEDD4 (via WW3 domain). NEDD4L and EGF promote association with NEDD4. Requires Mg(2+) as cofactor. Post-translationally, autophosphorylation regulates kinase activity. Phosphorylation on Tyr-533 is required for interaction with SRC and is observed during association with clathrin-coated pits. Polyubiquitinated by NEDD4 and NEDD4L. Degradation can be induced by EGF and is lysosome-dependent. As to expression, ubiquitously present in all tissues tested. Highly expressed in the adult central nervous system (CNS); hippocampus, neocortex, and cerebellum, both at dendritic spines and presynaptic axon terminals. Levels are strongly increased during enhanced neural activity.

The protein localises to the cell membrane. The protein resides in the nucleus. It is found in the endosome. Its subcellular location is the cell junction. It localises to the adherens junction. The protein localises to the cytoplasmic vesicle membrane. The protein resides in the cytoplasmic vesicle. It is found in the clathrin-coated vesicle. Its subcellular location is the membrane. It localises to the clathrin-coated pit. The protein localises to the cytoplasm. The protein resides in the cytosol. It carries out the reaction L-tyrosyl-[protein] + ATP = O-phospho-L-tyrosyl-[protein] + ADP + H(+). The enzyme catalyses L-seryl-[protein] + ATP = O-phospho-L-seryl-[protein] + ADP + H(+). The catalysed reaction is L-threonyl-[protein] + ATP = O-phospho-L-threonyl-[protein] + ADP + H(+). Its function is as follows. Non-receptor tyrosine-protein and serine/threonine-protein kinase that is implicated in cell spreading and migration, cell survival, cell growth and proliferation. Transduces extracellular signals to cytosolic and nuclear effectors. Phosphorylates AKT1, AR, MCF2, WASL and WWOX. Implicated in trafficking and clathrin-mediated endocytosis through binding to epidermal growth factor receptor (EGFR) and clathrin. Binds to both poly- and mono-ubiquitin and regulates ligand-induced degradation of EGFR, thereby contributing to the accumulation of EGFR at the limiting membrane of early endosomes. Downstream effector of CDC42 which mediates CDC42-dependent cell migration via phosphorylation of BCAR1. May be involved both in adult synaptic function and plasticity and in brain development. Activates AKT1 by phosphorylating it on 'Tyr-176'. Phosphorylates AR on 'Tyr-267' and 'Tyr-363' thereby promoting its recruitment to androgen-responsive enhancers (AREs). Phosphorylates WWOX on 'Tyr-287'. Phosphorylates MCF2, thereby enhancing its activity as a guanine nucleotide exchange factor (GEF) toward Rho family proteins. Contributes to the control of AXL receptor levels. Confers metastatic properties on cancer cells and promotes tumor growth by negatively regulating tumor suppressor such as WWOX and positively regulating pro-survival factors such as AKT1 and AR. The polypeptide is Activated CDC42 kinase 1 (Tnk2) (Mus musculus (Mouse)).